A 641-amino-acid polypeptide reads, in one-letter code: Anthrax toxin receptor-like (641 aa).

The signal sequence occupies residues Met1–Gly27. The Extracellular portion of the chain corresponds to Gly28–Thr363. Residues Asp76–Leu247 form the VWFA domain. A divalent metal cation is bound by residues Ser84, Ser86, and Thr150. A helical transmembrane segment spans residues Trp364–Leu384. The Cytoplasmic segment spans residues Cys385 to Phe641. Residues Leu391–Ala455 form a disordered region. Residues Pro407–Gly436 are compositionally biased toward pro residues.

This sequence belongs to the ATR family.

The protein resides in the membrane. The protein is Anthrax toxin receptor-like (Antxrl) of Mus musculus (Mouse).